We begin with the raw amino-acid sequence, 551 residues long: ATP-dependent RNA helicase MRH4, mitochondrial (551 aa).

The N-terminal 13 residues, 1 to 13, are a transit peptide targeting the mitochondrion; the sequence is MPPNLTPRSFNRD. Residues 43–73 carry the Q motif motif; it reads RTFDDFGLEEGLVKSLKGLYGEDGKTTPIET. Residues 85–293 enclose the Helicase ATP-binding domain; sequence ASAPIGSQRV…TTNPFFTKKE (209 aa). Residue 98–105 participates in ATP binding; it reads AETGSGKT. A DEAD box motif is present at residues 242 to 245; it reads DEAD. Positions 334–551 constitute a Helicase C-terminal domain; the sequence is TLAEDAKAAK…VGAMGKRVRT (218 aa). The disordered stretch occupies residues 504–527; the sequence is LGEGAKNNKGGKGQGPLKKDGKTA.

It belongs to the DEAD box helicase family. MRH4 subfamily.

It localises to the mitochondrion. The enzyme catalyses ATP + H2O = ADP + phosphate + H(+). Functionally, ATP-binding RNA helicase involved in mitochondrial RNA metabolism. Required for maintenance of mitochondrial DNA. This Cryptococcus neoformans var. neoformans serotype D (strain B-3501A) (Filobasidiella neoformans) protein is ATP-dependent RNA helicase MRH4, mitochondrial (MRH4).